Here is a 149-residue protein sequence, read N- to C-terminus: MRVWIDADACPRAARDQVVKFALKRGFEVVLVAGQAVARPNFACVKLIVVPSGPDAADDHLVEHAVPGELVICSDVPLADRLVKKGVAALDPRGREFDERNMGERLAVRNLFTDLREQGQVGGGQAPYSEKDRQAFANALDRILTRLSR.

Belongs to the UPF0178 family.

The protein is UPF0178 protein Pmen_0294 of Ectopseudomonas mendocina (strain ymp) (Pseudomonas mendocina).